The following is a 715-amino-acid chain: Harpin secretion protein HrpI (715 aa).

7 helical membrane passes run 23 to 43 (GAAIVMSIVFMMIIPLPTGLI), 45 to 65 (VLIALNICISSLLIVLAMYLP), 69 to 89 (AFSTFPSVLLLTTMFRLALSI), 115 to 135 (GNLAVGLVIFLILTVVNFLVI), 203 to 223 (AIAGLVIVFINMIGGFAIGVL), 241 to 261 (IGDGLIAQIPALLISLTAGMI), and 298 to 318 (MLGFALLPGMPTAVFVIISAI).

It belongs to the FHIPEP (flagella/HR/invasion proteins export pore) family.

The protein localises to the cell inner membrane. Functionally, involved in the secretion of harpin; a proteinaceous elicitor of the hypersensitivity response in plants. The protein is Harpin secretion protein HrpI (hrpI) of Erwinia amylovora (Fire blight bacteria).